A 226-amino-acid chain; its full sequence is Thiamine-phosphate synthase (226 aa).

Residues 46–50 (QLRDK) and Asn-87 contribute to the 4-amino-2-methyl-5-(diphosphooxymethyl)pyrimidine site. 2 residues coordinate Mg(2+): Asp-88 and Asp-107. 4-amino-2-methyl-5-(diphosphooxymethyl)pyrimidine is bound at residue Ser-126. 152–154 (TPT) contributes to the 2-[(2R,5Z)-2-carboxy-4-methylthiazol-5(2H)-ylidene]ethyl phosphate binding site. Lys-155 serves as a coordination point for 4-amino-2-methyl-5-(diphosphooxymethyl)pyrimidine. Gly-183 lines the 2-[(2R,5Z)-2-carboxy-4-methylthiazol-5(2H)-ylidene]ethyl phosphate pocket.

This sequence belongs to the thiamine-phosphate synthase family. It depends on Mg(2+) as a cofactor.

The catalysed reaction is 2-[(2R,5Z)-2-carboxy-4-methylthiazol-5(2H)-ylidene]ethyl phosphate + 4-amino-2-methyl-5-(diphosphooxymethyl)pyrimidine + 2 H(+) = thiamine phosphate + CO2 + diphosphate. It carries out the reaction 2-(2-carboxy-4-methylthiazol-5-yl)ethyl phosphate + 4-amino-2-methyl-5-(diphosphooxymethyl)pyrimidine + 2 H(+) = thiamine phosphate + CO2 + diphosphate. The enzyme catalyses 4-methyl-5-(2-phosphooxyethyl)-thiazole + 4-amino-2-methyl-5-(diphosphooxymethyl)pyrimidine + H(+) = thiamine phosphate + diphosphate. Its pathway is cofactor biosynthesis; thiamine diphosphate biosynthesis; thiamine phosphate from 4-amino-2-methyl-5-diphosphomethylpyrimidine and 4-methyl-5-(2-phosphoethyl)-thiazole: step 1/1. Condenses 4-methyl-5-(beta-hydroxyethyl)thiazole monophosphate (THZ-P) and 2-methyl-4-amino-5-hydroxymethyl pyrimidine pyrophosphate (HMP-PP) to form thiamine monophosphate (TMP). The sequence is that of Thiamine-phosphate synthase from Mycobacterium sp. (strain KMS).